Consider the following 235-residue polypeptide: ATP phosphoribosyltransferase (235 aa).

Belongs to the ATP phosphoribosyltransferase family. Short subfamily. Heteromultimer composed of HisG and HisZ subunits.

The protein localises to the cytoplasm. It carries out the reaction 1-(5-phospho-beta-D-ribosyl)-ATP + diphosphate = 5-phospho-alpha-D-ribose 1-diphosphate + ATP. It participates in amino-acid biosynthesis; L-histidine biosynthesis; L-histidine from 5-phospho-alpha-D-ribose 1-diphosphate: step 1/9. In terms of biological role, catalyzes the condensation of ATP and 5-phosphoribose 1-diphosphate to form N'-(5'-phosphoribosyl)-ATP (PR-ATP). Has a crucial role in the pathway because the rate of histidine biosynthesis seems to be controlled primarily by regulation of HisG enzymatic activity. In Synechococcus sp. (strain JA-2-3B'a(2-13)) (Cyanobacteria bacterium Yellowstone B-Prime), this protein is ATP phosphoribosyltransferase.